Reading from the N-terminus, the 811-residue chain is MAASGWGRGCDILIFYSPDAEEWCQYLQDLFVSCRQVRSQKTQTYRLVPDASFSAQDLWVFRDARCVLVLLSAGLVGCFGQPGLLPMLQRACHPPQRVVRLLCGVQPGDEDFQAFFPDWAHWQEMTCDDEPETYLAAVRKAISEDSGCDSVTDTEPEDERELPFSKQTNLPPEISPGNLMVVQPDRIRCGAETTVYIIVRCKLDEKVSTEAEFSPEDSPSIRVEGTLENEYTVSVKAPDLSSGNVSLKVYSGDLVVCETTVSYYTDMEEIGNLLSSAANPVEFMCQAFKIVPYNTETLDKLLTESLKNNIPASGLHLFGINQLEEDDMMTNQRDEELPTLLHFAAKYGLKNLTALLLTCPGALQAYSVANKHGHYPNTIAEKHGFRDLRQFIDEYVETVDMLKTHIKEELMQGEEADDVYESMAHLSTDLLMKCSLNPGCDDELYESMAAFAPAATEDLYVEMLQASAGNPVSGESFSRPTKDSMIRKFLEGNSVKPASWEREQHHPYGEELYHIVDEDETFSVDLANRPPVPVPRPEASAPGPPPPPDNEPYISKVFAEKSQERLGNFYVSSESIRKEPLVRPWRDRPPSSIYDPFAGMKTPGQRQLITLQEQVKLGIVNVDEAVLHFKEWQLNQKKRSESFRFQQENLKRLRESITRRRKEKPKSGKHTDLEITVPIRHSQHLPEKVEFGVYESGPRKSVLPARTELRRGDWKTDSMSSTASSTSNRSSTRSLLSVSSGMEGDNEDNEIPEITRSRGPGPTQVDGAPVVTGTPVGTLERPPRVPPRAASQRPLTRESFHPPPPVPPRGR.

Residues 8 to 146 enclose the TIR domain; sequence RGCDILIFYS…AVRKAISEDS (139 aa). The tract at residues 10-145 is necessary and sufficient to mediate inhibition of NF-kappa-B downstream of activated TLRs; may mediate interaction with MYD88 and TIRAP; sequence CDILIFYSPD…AAVRKAISED (136 aa). Residues 146-169 form a disordered region; sequence SGCDSVTDTEPEDERELPFSKQTN. The DBB domain maps to 182–318; it reads VQPDRIRCGA…NIPASGLHLF (137 aa). Tyr-264 is subject to Phosphotyrosine. Phosphotyrosine; by SYK is present on residues Tyr-420, Tyr-445, and Tyr-460. Tyr-513 carries the phosphotyrosine; by ABL1 modification. The segment at 525–551 is disordered; sequence DLANRPPVPVPRPEASAPGPPPPPDNE. Pro residues predominate over residues 530 to 550; the sequence is PPVPVPRPEASAPGPPPPPDN. Residues Tyr-553, Tyr-570, and Tyr-594 each carry the phosphotyrosine; by ABL1 modification. Ser-642 bears the Phosphoserine mark. Tyr-694 carries the post-translational modification Phosphotyrosine; by ABL1. The disordered stretch occupies residues 702–811; it reads VLPARTELRR…PPPPVPPRGR (110 aa). Over residues 707-716 the composition is skewed to basic and acidic residues; the sequence is TELRRGDWKT. A compositionally biased stretch (low complexity) spans 717 to 740; that stretch reads DSMSSTASSTSNRSSTRSLLSVSS. Phosphoserine is present on Ser-718. The segment covering 801 to 811 has biased composition (pro residues); sequence HPPPPVPPRGR.

In terms of assembly, homooligomer. Interacts (phosphorylated on tyrosine residues within YXXM motifs) with PIK3R1 (via SH2 domain); required for BCR- and TLR-mediated activation of phosphoinositide 3-kinase. Interacts (via polyproline C-terminal region) with ABI1 (via SH3 domain); the interaction promotes phosphorylation of PIK3AP1 by ABL1. May interact with MYD88 and TIRAP. In terms of processing, constitutively phosphorylated. Phosphorylated on tyrosine residues in C-terminal region by ABL1. Phosphorylated on tyrosine residues within the YXXM motifs by BTK and SYK. Isoform 1 and isoform 2 are phosphorylated on tyrosine residues, most likely within the YXXM motifs, via CD19 activation. Toll-like receptor activation induces appearance of a phosphorylated form associated with membranes. In terms of tissue distribution, predominantly expressed in spleen (at protein level). Expressed at lower levels in thymus, liver and lung. Expressed in B-cells, macrophages and natural killer (NK) cells.

It localises to the cytoplasm. It is found in the cell membrane. In terms of biological role, signaling adapter that contributes to B-cell development by linking B-cell receptor (BCR) signaling to the phosphoinositide 3-kinase (PI3K)-Akt signaling pathway. Has a complementary role to the BCR coreceptor CD19, coupling BCR and PI3K activation by providing a docking site for the PI3K subunit PIK3R1. Alternatively, links Toll-like receptor (TLR) signaling to PI3K activation, a process preventing excessive inflammatory cytokine production. Also involved in the activation of PI3K in natural killer cells. May be involved in the survival of mature B-cells via activation of REL. In Mus musculus (Mouse), this protein is Phosphoinositide 3-kinase adapter protein 1 (Pik3ap1).